A 1338-amino-acid polypeptide reads, in one-letter code: Phosphoribosylformylglycinamidine synthase (1338 aa).

Ser-215 carries the post-translational modification Phosphoserine. ATP contacts are provided by residues 322 to 333 (GATTGTGGRIRD) and 402 to 404 (AGF). Ser-569 carries the post-translational modification Phosphoserine. Residues Thr-619 and Thr-623 each carry the phosphothreonine modification. Ala-706 contacts ATP. Mg(2+) contacts are provided by Asp-707, Glu-746, Asn-750, and Asp-909. Residue Ser-911 participates in ATP binding. Residues 1064–1302 (RVAILREEGS…AVMPHPERAV (239 aa)) form the Glutamine amidotransferase type-1 domain. The Nucleophile role is filled by Cys-1158. Residues His-1297 and Glu-1299 contribute to the active site.

In the N-terminal section; belongs to the FGAMS family.

It localises to the cytoplasm. It catalyses the reaction N(2)-formyl-N(1)-(5-phospho-beta-D-ribosyl)glycinamide + L-glutamine + ATP + H2O = 2-formamido-N(1)-(5-O-phospho-beta-D-ribosyl)acetamidine + L-glutamate + ADP + phosphate + H(+). The protein operates within purine metabolism; IMP biosynthesis via de novo pathway; 5-amino-1-(5-phospho-D-ribosyl)imidazole from N(2)-formyl-N(1)-(5-phospho-D-ribosyl)glycinamide: step 1/2. Its function is as follows. Phosphoribosylformylglycinamidine synthase involved in the purines biosynthetic pathway. Catalyzes the ATP-dependent conversion of formylglycinamide ribonucleotide (FGAR) and glutamine to yield formylglycinamidine ribonucleotide (FGAM) and glutamate. This is Phosphoribosylformylglycinamidine synthase (PFAS) from Homo sapiens (Human).